A 239-amino-acid polypeptide reads, in one-letter code: Vesicle-associated protein 1-2 (239 aa).

Residue methionine 1 is modified to N-acetylmethionine. Topologically, residues 1–215 (MSNELLTIDP…RRESKRSKSG (215 aa)) are cytoplasmic. An N-acetylserine; in Vesicle-associated protein 1-2, N-terminally processed modification is found at serine 2. One can recognise an MSP domain in the interval 5–125 (LLTIDPVDLQ…EETKLRVVYV (121 aa)). Residues 123-174 (VYVAPPRPPSPVREGSEEGSSPRASVSDNGNASDFTAAPRFSADRVDAQDNS) form a disordered region. Serine 132 is modified (phosphoserine). A compositionally biased stretch (polar residues) spans 140–156 (EGSSPRASVSDNGNASD). Serine 164 carries the post-translational modification Phosphoserine. The stretch at 169 to 215 (DAQDNSSEARALVTKLTEEKNSAVQLNNRLQQELDQLRRESKRSKSG) forms a coiled coil. A helical; Anchor for type IV membrane protein transmembrane segment spans residues 216 to 236 (GIPFMYVLLVGLIGLILGYIM).

This sequence belongs to the VAMP-associated protein (VAP) (TC 9.B.17) family. Interacts with ORP3A. Binds to VLG at the endomembrane system.

It is found in the endoplasmic reticulum membrane. In terms of biological role, vesicle-associated protein that binds the oxysterol-binding protein ORP3A and allows its targeting to the ER. The polypeptide is Vesicle-associated protein 1-2 (Arabidopsis thaliana (Mouse-ear cress)).